A 591-amino-acid polypeptide reads, in one-letter code: Negative elongation factor D (591 aa).

Residues 1–44 are disordered; it reads MAGPAPGTIMGEDYFGNASEWGEEADGGQHQEDDSGEGEDDAEV. A compositionally biased stretch (acidic residues) spans 34–44; the sequence is DSGEGEDDAEV.

Belongs to the NELF-D family. The NELF complex is composed of NELFA, NELFB, NELFCD and NELFE; NELFA and NELFCD form a stable subcomplex that binds primarily through NELFCD to the N-terminus of NELFB. Binds RNA which may help to stabilize the NELF complex on nucleic acid. In vitro, the NELFA:NELFCD subcomplex binds to ssDNA and ssRNA in a sequence- and structure-dependent manner. Interacts with ARAF1. Interacts with PCF11. Interacts with NELFB. Interacts with KAT8.

It localises to the nucleus. In terms of biological role, essential component of the NELF complex, a complex that negatively regulates the elongation of transcription by RNA polymerase II. The NELF complex, which acts via an association with the DSIF complex and causes transcriptional pausing, is counteracted by the P-TEFb kinase complex. The sequence is that of Negative elongation factor D (Nelfcd) from Mus musculus (Mouse).